Here is an 83-residue protein sequence, read N- to C-terminus: Putative membrane protein insertion efficiency factor (83 aa).

The disordered stretch occupies residues 63 to 83; it reads GGNDPVPDHFSLRRNKTDISD. Positions 68-83 are enriched in basic and acidic residues; the sequence is VPDHFSLRRNKTDISD.

It belongs to the UPF0161 family.

The protein resides in the cell membrane. In terms of biological role, could be involved in insertion of integral membrane proteins into the membrane. In Streptococcus agalactiae serotype Ia (strain ATCC 27591 / A909 / CDC SS700), this protein is Putative membrane protein insertion efficiency factor.